The sequence spans 171 residues: Endoribonuclease YbeY (171 aa).

Zn(2+) contacts are provided by His-126, His-130, and His-136.

The protein belongs to the endoribonuclease YbeY family. It depends on Zn(2+) as a cofactor.

The protein localises to the cytoplasm. Functionally, single strand-specific metallo-endoribonuclease involved in late-stage 70S ribosome quality control and in maturation of the 3' terminus of the 16S rRNA. The sequence is that of Endoribonuclease YbeY from Rhizobium etli (strain CIAT 652).